The chain runs to 991 residues: Mediator of RNA polymerase II transcription subunit 5 (991 aa).

This sequence belongs to the Mediator complex subunit 5 family. As to quaternary structure, component of the Mediator complex.

The protein localises to the nucleus. In terms of biological role, component of the Mediator complex, a coactivator involved in the regulated transcription of nearly all RNA polymerase II-dependent genes. Mediator functions as a bridge to convey information from gene-specific regulatory proteins to the basal RNA polymerase II transcription machinery. Mediator is recruited to promoters by direct interactions with regulatory proteins and serves as a scaffold for the assembly of a functional preinitiation complex with RNA polymerase II and the general transcription factors. The protein is Mediator of RNA polymerase II transcription subunit 5 (NUT1) of Yarrowia lipolytica (strain CLIB 122 / E 150) (Yeast).